Consider the following 230-residue polypeptide: uncharacterized protein (230 aa).

This is an uncharacterized protein from Aquifex aeolicus (strain VF5).